Here is a 433-residue protein sequence, read N- to C-terminus: Histidine--tRNA ligase (433 aa).

This sequence belongs to the class-II aminoacyl-tRNA synthetase family. Homodimer.

The protein localises to the cytoplasm. The enzyme catalyses tRNA(His) + L-histidine + ATP = L-histidyl-tRNA(His) + AMP + diphosphate + H(+). This chain is Histidine--tRNA ligase, found in Azoarcus sp. (strain BH72).